We begin with the raw amino-acid sequence, 23 residues long: Hongotoxin-4 (23 aa).

Belongs to the short scorpion toxin superfamily. Potassium channel inhibitor family. Alpha-KTx 02 subfamily. Expressed by the venom gland.

It is found in the secreted. Its function is as follows. Potent selective inhibitor of Kv1/KCNA voltage-gated potassium channels. This chain is Hongotoxin-4, found in Centruroides limbatus (Bark scorpion).